The following is a 368-amino-acid chain: Protein-glutamate methylesterase/protein-glutamine glutaminase (368 aa).

The Response regulatory domain maps to 9 to 126 (KVLVVDDSAF…SINMKELKDE (118 aa)). A 4-aspartylphosphate modification is found at aspartate 60. Residues 161–354 (SVPARIAVAI…ETVVKAVEII (194 aa)) enclose the CheB-type methylesterase domain. Active-site residues include serine 173, histidine 200, and aspartate 296.

This sequence belongs to the CheB family. Phosphorylated by CheA. Phosphorylation of the N-terminal regulatory domain activates the methylesterase activity.

The protein localises to the cytoplasm. The enzyme catalyses [protein]-L-glutamate 5-O-methyl ester + H2O = L-glutamyl-[protein] + methanol + H(+). The catalysed reaction is L-glutaminyl-[protein] + H2O = L-glutamyl-[protein] + NH4(+). In terms of biological role, involved in chemotaxis. Part of a chemotaxis signal transduction system that modulates chemotaxis in response to various stimuli. Catalyzes the demethylation of specific methylglutamate residues introduced into the chemoreceptors (methyl-accepting chemotaxis proteins or MCP) by CheR. Also mediates the irreversible deamidation of specific glutamine residues to glutamic acid. The sequence is that of Protein-glutamate methylesterase/protein-glutamine glutaminase from Pyrococcus horikoshii (strain ATCC 700860 / DSM 12428 / JCM 9974 / NBRC 100139 / OT-3).